A 463-amino-acid chain; its full sequence is MSIKNLYKNLNDEMGSISKRRKNNNISFNKSTFDSHAMDALNTSFENYEDISLEGFESYINESASRTVIERNSLVPLKDYDAVHSLRNAFGKPPRDNEPRIGTHPEFKHLELDNRTDTGYVVTMFMDIIGSTKLGLSYSPSDVFLFKNNIITGAIETINAFDGHVHRIMGDAVMAFFRSRQNEQHDTLENSVIDAINCAAYFIEVMNEIVKPQIKEVADENIGIRIGIDLGETNYVLWGNYGIPGVNEVTATSFFVDIASKLQHKAPKNSIMLGQNLVEKLGLTVNDYLTYKLKDGQPDRYIIDFTSKNQSRLRYKQYLLNQSKYFSILPHGLKPSRIKVVISYSNDELGLVNRKDYFNCSSVIPKGKWVKFHATFCEEYGEHYESLKFKFRVVNNGLDASKKDNYDNHETEIIKKAYEKENGVFTAIHKEQTSYKGLQHMYISVISNDTVIEREIPCSIFIK.

Residues 122-231 enclose the Guanylate cyclase domain; that stretch reads VTMFMDIIGS…IGIRIGIDLG (110 aa). Phe-125 lines the a ribonucleoside 5'-triphosphate pocket. Positions 127, 128, and 171 each coordinate Mn(2+). An AGS-C domain region spans residues 334–454; that stretch reads KPSRIKVVIS…VISNDTVIER (121 aa).

The protein belongs to the adenylyl cyclase class-4/guanylyl cyclase family. Pyrimidine cyclase subfamily. In terms of assembly, homodimer. The cofactor is Mn(2+).

It is found in the cytoplasm. The enzyme catalyses CTP = 3',5'-cyclic CMP + diphosphate. Pycsar (pyrimidine cyclase system for antiphage resistance) provides immunity against bacteriophage. The pyrimidine cyclase (PycC) synthesizes cyclic nucleotides in response to infection; these serve as specific second messenger signals. The signal activates the adjacent effector, leading to bacterial cell death and abortive phage infection. A clade E Pycsar system. In terms of biological role, the pyrimidine cyclase gene of a two-gene Pycsar system, generates cyclic CMP (cCMP) from CTP in response to bacteriophage infection. Has little to no activity on ATP, GTP or UTP. Expression of this and adjacent effector Ec303145PycTM (AC P0DV27) confers resistance to bacteriophage P1, T5, lambda-vir and phi27. The chain is Cytidylate cyclase from Escherichia coli.